The sequence spans 186 residues: Potassium-transporting ATPase KdpC subunit (186 aa).

The helical transmembrane segment at 10–30 threads the bilayer; the sequence is LTIITMVLCGFLFPLAITLIG.

This sequence belongs to the KdpC family. As to quaternary structure, the system is composed of three essential subunits: KdpA, KdpB and KdpC.

The protein localises to the cell membrane. Functionally, part of the high-affinity ATP-driven potassium transport (or Kdp) system, which catalyzes the hydrolysis of ATP coupled with the electrogenic transport of potassium into the cytoplasm. This subunit acts as a catalytic chaperone that increases the ATP-binding affinity of the ATP-hydrolyzing subunit KdpB by the formation of a transient KdpB/KdpC/ATP ternary complex. The sequence is that of Potassium-transporting ATPase KdpC subunit from Staphylococcus aureus (strain bovine RF122 / ET3-1).